The sequence spans 676 residues: UvrABC system protein C (676 aa).

One can recognise a GIY-YIG domain in the interval 16–95 (VEPGVYRFRD…IKEFDPRFNI (80 aa)). In terms of domain architecture, UVR spans 208–243 (DRLVRDLERKMTAAAEDLDFERAARLRDDIGALRRA).

This sequence belongs to the UvrC family. Interacts with UvrB in an incision complex.

The protein localises to the cytoplasm. Functionally, the UvrABC repair system catalyzes the recognition and processing of DNA lesions. UvrC both incises the 5' and 3' sides of the lesion. The N-terminal half is responsible for the 3' incision and the C-terminal half is responsible for the 5' incision. The polypeptide is UvrABC system protein C (Mycobacterium sp. (strain KMS)).